The following is a 96-amino-acid chain: Small ribosomal subunit protein bS6c (96 aa).

It belongs to the bacterial ribosomal protein bS6 family.

It localises to the plastid. It is found in the chloroplast. Binds together with bS18 to 16S ribosomal RNA. This Trieres chinensis (Marine centric diatom) protein is Small ribosomal subunit protein bS6c (rps6).